The sequence spans 511 residues: Aprataxin and PNK-like factor (511 aa).

The region spanning 1–108 is the FHA-like domain; that stretch reads MSGGFELQPR…RILSIPSEVE (108 aa). Phosphoserine; by ATM is present on S116. S149 bears the Phosphoserine mark. Residues 182–191 carry the KBM motif; the sequence is RKRILPTWML. The disordered stretch occupies residues 223–370; sequence KSQLNTTQQG…ATDSVLQGSE (148 aa). Polar residues-rich tracts occupy residues 225–249 and 263–293; these read QLNT…SAEQ and STIS…NAQR. Basic residues predominate over residues 304–315; sequence VSKHKIATKRTP. The span at 324-344 shows a compositional bias: polar residues; the sequence is CSENCSSAQGDSLQDESQGSH. Residues 345 to 355 show a composition bias toward low complexity; the sequence is SESSSNPSNPE. A glycoprotein contacts are provided by R376, Y381, Y386, and R387. Residues 377–398 form a PBZ-type 1 zinc finger; sequence TSCMYGANCYRKNPVHFQHFSH. The flexible linker stretch occupies residues 406-416; sequence GVQIVGQDETD. The PBZ-type 2 zinc-finger motif lies at 419–440; the sequence is PECPYGPSCYRKNPQHKIEYRH. Residues Y423, Y428, and R429 each coordinate a glycoprotein. Residues 449-497 are disordered; the sequence is LDEDNDNVGQPNEYDLNDSFLDDEEEDYEPTDEDSDWEPGKEDEEKEDV. The span at 468–497 shows a compositional bias: acidic residues; it reads FLDDEEEDYEPTDEDSDWEPGKEDEEKEDV. Residues 476–500 carry the NAP1L motif motif; it reads YEPTDEDSDWEPGKEDEEKEDVEEL. Residues 487 to 511 are a coiled coil; that stretch reads PGKEDEEKEDVEELLKEAKRFMKRK.

Belongs to the APLF family. Interacts with LIG4. Interacts with PARP1. Interacts with XRCC4. Interacts (via KBM motif) with XRCC5 and XRCC6; promoting recruitment to DNA damage sites. Interacts with XRCC1. Interacts (via C-terminal disordered region) with histones; interacts with histone H2A, H2B and H3-H4. In terms of processing, poly-ADP-ribosylated. In addition to binding non covalently poly-ADP-ribose via its PBZ-type zinc fingers, the protein is also covalently poly-ADP-ribosylated by PARP1. Phosphorylated in an ATM-dependent manner upon double-strand DNA break.

Its subcellular location is the nucleus. It is found in the chromosome. The protein localises to the cytoplasm. The protein resides in the cytosol. Functionally, histone chaperone involved in single-strand and double-strand DNA break repair. Recruited to sites of DNA damage through interaction with branched poly-ADP-ribose chains, a polymeric post-translational modification synthesized transiently at sites of chromosomal damage to accelerate DNA strand break repair reactions. Following recruitment to DNA damage sites, acts as a histone chaperone that mediates histone eviction during DNA repair and promotes recruitment of histone variant MACROH2A1. Also has a nuclease activity: displays apurinic-apyrimidinic (AP) endonuclease and 3'-5' exonuclease activities in vitro. Also able to introduce nicks at hydroxyuracil and other types of pyrimidine base damage. Together with PARP3, promotes the retention of the LIG4-XRCC4 complex on chromatin and accelerate DNA ligation during non-homologous end-joining (NHEJ). Also acts as a negative regulator of cell pluripotency by promoting histone exchange. Required for the embryo implantation during the epithelial to mesenchymal transition in females. This is Aprataxin and PNK-like factor from Homo sapiens (Human).